Consider the following 555-residue polypeptide: MAAAAWLQVLPVILLLLGAHPSPLSFFSAGPATVAAADRSKWHIPIPSGKNYFSFGKILFRNTTIFLKFDGEPCDLSLNITWYLKSADCYNEIYNFKAEEVELYLEKLKEKRGLSGKYQTSSKLFQNCSELFKTQTFSGDFMHRLPLLGEKQEAKENGTNLTFIGDKTAMHEPLQTWQDAPYIFIVHIGISSSKESSKENSLSNLFTMTVEVKGPYEYLTLEDYPLMIFFMVMCIVYVLFGVLWLAWSACYWRDLLRIQFWIGAVIFLGMLEKAVFYAEFQNIRYKGESVQGALILAELLSAVKRSLARTLVIIVSLGYGIVKPRLGVTLHKVVVAGALYLLFSGMEGVLRVTGAQTDLASLAFIPLAFLDTALCWWIFISLTQTMKLLKLRRNIVKLSLYRHFTNTLILAVAASIVFIIWTTMKFRIVTCQSDWRELWVDDAIWRLLFSMILFVIMVLWRPSANNQRFAFSPLSEEEEEDEQKEPMLKESFEGMKMRSTKQEPNGNSKVNKAQEDDLKWVEENVPSSVTDVALPALLDSDEERMITHFERSKME.

Residues 1-21 (MAAAAWLQVLPVILLLLGAHP) form the signal peptide. The Lumenal segment spans residues 22–225 (SPLSFFSAGP…YEYLTLEDYP (204 aa)). 2 cysteine pairs are disulfide-bonded: cysteine 74-cysteine 128 and cysteine 89-cysteine 431. N-linked (GlcNAc...) asparagine glycosylation is found at asparagine 79, asparagine 127, asparagine 157, and asparagine 160. Residues 226-246 (LMIFFMVMCIVYVLFGVLWLA) form a helical membrane-spanning segment. Residues 247-257 (WSACYWRDLLR) lie on the Cytoplasmic side of the membrane. A helical membrane pass occupies residues 258–278 (IQFWIGAVIFLGMLEKAVFYA). Topologically, residues 279 to 305 (EFQNIRYKGESVQGALILAELLSAVKR) are lumenal. A helical membrane pass occupies residues 306–322 (SLARTLVIIVSLGYGIV). The Cytoplasmic segment spans residues 323–325 (KPR). The helical transmembrane segment at 326-346 (LGVTLHKVVVAGALYLLFSGM) threads the bilayer. Topologically, residues 347–361 (EGVLRVTGAQTDLAS) are lumenal. A helical membrane pass occupies residues 362–382 (LAFIPLAFLDTALCWWIFISL). The Cytoplasmic segment spans residues 383-403 (TQTMKLLKLRRNIVKLSLYRH). A helical transmembrane segment spans residues 404 to 424 (FTNTLILAVAASIVFIIWTTM). Residues 425 to 437 (KFRIVTCQSDWRE) lie on the Lumenal side of the membrane. Residues 438-458 (LWVDDAIWRLLFSMILFVIMV) traverse the membrane as a helical segment. At 459–555 (LWRPSANNQR…ITHFERSKME (97 aa)) the chain is on the cytoplasmic side. The disordered stretch occupies residues 473–516 (PLSEEEEEDEQKEPMLKESFEGMKMRSTKQEPNGNSKVNKAQED). Positions 484–496 (KEPMLKESFEGMK) are enriched in basic and acidic residues. Positions 502 to 511 (QEPNGNSKVN) are enriched in polar residues. Serine 540 is modified (phosphoserine).

This sequence belongs to the LU7TM family. TMEM87 subfamily. May interact with STOML3; STOML3 potentiates the mechanosensitive ion channel activity associated with TMEM87A.

It localises to the cell membrane. It is found in the golgi apparatus membrane. Its subcellular location is the cell projection. The protein localises to the ruffle. Functionally, potential monoatomic ion channel gated by mechanical force, implicated in normal touch sensitivity through the generation of mechanically activated currents. However, a direct channel activity is debated and an alternative could be that it functions as a chaperone for an unidentified mechanosensitive ion channel. Could also be involved in cell mechanosensitivity regulating cell adhesion and migration. May also be involved in retrograde transport from endosomes to the trans-Golgi network (TGN). In Homo sapiens (Human), this protein is Transmembrane protein 87A.